A 214-amino-acid chain; its full sequence is Pyridoxine/pyridoxamine 5'-phosphate oxidase (214 aa).

Residues 9-12 (RREY) and Lys67 contribute to the substrate site. Residues 62 to 67 (RTVLLK), 77 to 78 (YS), Arg83, Lys84, and Gln106 contribute to the FMN site. Tyr124, Arg128, and Ser132 together coordinate substrate. Residues 141–142 (QS) and Trp186 each bind FMN. 192 to 194 (RLH) is a binding site for substrate. Residue Arg196 coordinates FMN.

This sequence belongs to the pyridoxamine 5'-phosphate oxidase family. Homodimer. It depends on FMN as a cofactor.

The catalysed reaction is pyridoxamine 5'-phosphate + O2 + H2O = pyridoxal 5'-phosphate + H2O2 + NH4(+). The enzyme catalyses pyridoxine 5'-phosphate + O2 = pyridoxal 5'-phosphate + H2O2. It participates in cofactor metabolism; pyridoxal 5'-phosphate salvage; pyridoxal 5'-phosphate from pyridoxamine 5'-phosphate: step 1/1. The protein operates within cofactor metabolism; pyridoxal 5'-phosphate salvage; pyridoxal 5'-phosphate from pyridoxine 5'-phosphate: step 1/1. Catalyzes the oxidation of either pyridoxine 5'-phosphate (PNP) or pyridoxamine 5'-phosphate (PMP) into pyridoxal 5'-phosphate (PLP). The chain is Pyridoxine/pyridoxamine 5'-phosphate oxidase from Porphyromonas gingivalis (strain ATCC BAA-308 / W83).